The following is a 913-amino-acid chain: Protein translocase subunit SecA (913 aa).

ATP contacts are provided by residues Gln87, 105–109 (GEGKT), and Asp512. 4 residues coordinate Zn(2+): Cys897, Cys899, Cys908, and His909.

This sequence belongs to the SecA family. Monomer and homodimer. Part of the essential Sec protein translocation apparatus which comprises SecA, SecYEG and auxiliary proteins SecDF-YajC and YidC. Zn(2+) is required as a cofactor.

Its subcellular location is the cell inner membrane. The protein resides in the cytoplasm. The enzyme catalyses ATP + H2O + cellular proteinSide 1 = ADP + phosphate + cellular proteinSide 2.. Functionally, part of the Sec protein translocase complex. Interacts with the SecYEG preprotein conducting channel. Has a central role in coupling the hydrolysis of ATP to the transfer of proteins into and across the cell membrane, serving both as a receptor for the preprotein-SecB complex and as an ATP-driven molecular motor driving the stepwise translocation of polypeptide chains across the membrane. In Pseudomonas savastanoi pv. phaseolicola (strain 1448A / Race 6) (Pseudomonas syringae pv. phaseolicola (strain 1448A / Race 6)), this protein is Protein translocase subunit SecA.